Here is a 406-residue protein sequence, read N- to C-terminus: Nicotinate phosphoribosyltransferase (406 aa).

The residue at position 226 (H226) is a Phosphohistidine; by autocatalysis.

This sequence belongs to the NAPRTase family. Post-translationally, transiently phosphorylated on a His residue during the reaction cycle. Phosphorylation strongly increases the affinity for substrates and increases the rate of nicotinate D-ribonucleotide production. Dephosphorylation regenerates the low-affinity form of the enzyme, leading to product release.

The enzyme catalyses nicotinate + 5-phospho-alpha-D-ribose 1-diphosphate + ATP + H2O = nicotinate beta-D-ribonucleotide + ADP + phosphate + diphosphate. Its pathway is cofactor biosynthesis; NAD(+) biosynthesis; nicotinate D-ribonucleotide from nicotinate: step 1/1. Functionally, catalyzes the synthesis of beta-nicotinate D-ribonucleotide from nicotinate and 5-phospho-D-ribose 1-phosphate at the expense of ATP. The polypeptide is Nicotinate phosphoribosyltransferase (Verminephrobacter eiseniae (strain EF01-2)).